Reading from the N-terminus, the 39-residue chain is Cytochrome b6-f complex subunit 5 (39 aa).

The helical transmembrane segment at leucine 5–alanine 25 threads the bilayer.

Belongs to the PetG family. In terms of assembly, the 4 large subunits of the cytochrome b6-f complex are cytochrome b6, subunit IV (17 kDa polypeptide, PetD), cytochrome f and the Rieske protein, while the 4 small subunits are PetG, PetL, PetM and PetN. The complex functions as a dimer.

Its subcellular location is the cellular thylakoid membrane. In terms of biological role, component of the cytochrome b6-f complex, which mediates electron transfer between photosystem II (PSII) and photosystem I (PSI), cyclic electron flow around PSI, and state transitions. PetG is required for either the stability or assembly of the cytochrome b6-f complex. The chain is Cytochrome b6-f complex subunit 5 from Prochlorococcus marinus (strain MIT 9211).